A 267-amino-acid polypeptide reads, in one-letter code: PHD finger protein ALFIN-LIKE 7 (267 aa).

The segment at 162–207 (TKVSNGSSKSNKSNPKPSKQSNSNSKPAKPPQPKDEEDSGPEGTED) is disordered. Residues 165–188 (SNGSSKSNKSNPKPSKQSNSNSKP) show a composition bias toward low complexity. Residues 196-207 (DEEDSGPEGTED) are compositionally biased toward acidic residues. The PHD-type zinc-finger motif lies at 211–263 (AYMCGACGETYANGEFWICCDVCEKWFHGKCVRITPAKAEHIKQYKCPGCSSK).

Belongs to the Alfin family. Interacts with H3K4me3 and to a lesser extent with H3K4me2.

The protein localises to the nucleus. Histone-binding component that specifically recognizes H3 tails trimethylated on 'Lys-4' (H3K4me3), which mark transcription start sites of virtually all active genes. The sequence is that of PHD finger protein ALFIN-LIKE 7 from Oryza sativa subsp. japonica (Rice).